The following is a 129-amino-acid chain: Fluoride-specific ion channel FluC (129 aa).

4 helical membrane passes run 10–30 (LLVGAGGFLGTVARYLVALAF), 35–55 (PGFPFATFSVNIAGSFLIGFL), 71–91 (LFLVTGFCGGFTTFSSYMFEG), and 105–125 (LYLAGSIVGGFVALYTGIIAA). Residues Gly-79 and Thr-82 each coordinate Na(+).

This sequence belongs to the fluoride channel Fluc/FEX (TC 1.A.43) family.

Its subcellular location is the cell inner membrane. It carries out the reaction fluoride(in) = fluoride(out). With respect to regulation, na(+) is not transported, but it plays an essential structural role and its presence is essential for fluoride channel function. Its function is as follows. Fluoride-specific ion channel. Important for reducing fluoride concentration in the cell, thus reducing its toxicity. This is Fluoride-specific ion channel FluC from Chlorobium luteolum (strain DSM 273 / BCRC 81028 / 2530) (Pelodictyon luteolum).